Reading from the N-terminus, the 346-residue chain is Very-long-chain 3-oxoacyl-CoA reductase (346 aa).

Residues 26–46 (GASALLAAGSLFVVSRALVFV) traverse the membrane as a helical segment. The NADP(+) site is built by Val71, Asp126, Asp134, Asn153, Tyr220, Lys224, Ile253, and Ser255. Tyr220 functions as the Proton donor in the catalytic mechanism. Lys224 serves as the catalytic Lowers pKa of active site Tyr.

It belongs to the short-chain dehydrogenases/reductases (SDR) family.

Its subcellular location is the endoplasmic reticulum membrane. The catalysed reaction is a very-long-chain (3R)-3-hydroxyacyl-CoA + NADP(+) = a very-long-chain 3-oxoacyl-CoA + NADPH + H(+). It participates in lipid metabolism; fatty acid biosynthesis. In terms of biological role, component of the microsomal membrane bound fatty acid elongation system, which produces the 26-carbon very long-chain fatty acids (VLCFA) from palmitate. Catalyzes the reduction of the 3-ketoacyl-CoA intermediate that is formed in each cycle of fatty acid elongation. VLCFAs serve as precursors for ceramide and sphingolipids. This chain is Very-long-chain 3-oxoacyl-CoA reductase, found in Aspergillus niger (strain ATCC MYA-4892 / CBS 513.88 / FGSC A1513).